We begin with the raw amino-acid sequence, 412 residues long: tRNA pseudouridine synthase Pus10 (412 aa).

Positions 73 to 197 (HEPSIKFLSN…TGSVEVQIMP (125 aa)) constitute a THUMP domain. Residues tyrosine 308 and tyrosine 376 each coordinate substrate.

It belongs to the pseudouridine synthase Pus10 family.

The catalysed reaction is uridine(54) in tRNA = pseudouridine(54) in tRNA. It carries out the reaction uridine(55) in tRNA = pseudouridine(55) in tRNA. Its function is as follows. Responsible for synthesis of pseudouridine from uracil-54 and uracil-55 in the psi GC loop of transfer RNAs. The sequence is that of tRNA pseudouridine synthase Pus10 from Vulcanisaeta distributa (strain DSM 14429 / JCM 11212 / NBRC 100878 / IC-017).